The sequence spans 356 residues: Cytochrome c oxidase subunit 2 (356 aa).

An N-terminal signal peptide occupies residues 1–20 (MVKHWRLILLLALVPLLLSG). The N-palmitoyl cysteine moiety is linked to residue Cys-21. Cys-21 is lipidated: S-diacylglycerol cysteine. Over 21-47 (CGKPFLSTLKPAGEVADKQYDLTVLST) the chain is Extracellular. The interval 21 to 257 (CGKPFLSTLK…KNYKSTAESD (237 aa)) is cytochrome c oxidase subunit II. The helical transmembrane segment at 48–66 (LIMVVVVAVVSVIFFYVIV) threads the bilayer. At 67–87 (RFRRSRVGENTIPKQVEGNKF) the chain is on the cytoplasmic side. A helical transmembrane segment spans residues 88–106 (LEITWTVIPILLLIILVIP). Topologically, residues 107–356 (VVLYTLELAD…YLKGLKAESK (250 aa)) are extracellular. Residues His-176, Cys-217, Cys-221, and His-225 each contribute to the Cu cation site. Positions 258–356 (LAKQGEELFK…YLKGLKAESK (99 aa)) constitute a Cytochrome c domain. Cys-271, Cys-274, His-275, and Met-329 together coordinate heme c.

Belongs to the cytochrome c oxidase subunit 2 family. It depends on Cu cation as a cofactor. Heme c serves as cofactor.

It is found in the cell membrane. The enzyme catalyses 4 Fe(II)-[cytochrome c] + O2 + 8 H(+)(in) = 4 Fe(III)-[cytochrome c] + 2 H2O + 4 H(+)(out). In terms of biological role, subunits I and II form the functional core of the enzyme complex. Electrons originating in cytochrome c are transferred via heme a and Cu(A) to the binuclear center formed by heme a3 and Cu(B). In Bacillus subtilis (strain 168), this protein is Cytochrome c oxidase subunit 2 (ctaC).